The sequence spans 743 residues: Peptide transporter family 1 (743 aa).

A disordered region spans residues 1–28 (MASEITNGKNGQNGKNGQKEESDSQIAP). A compositionally biased stretch (low complexity) spans 7-16 (NGKNGQNGKN). The next 10 membrane-spanning stretches (helical) occupy residues 74 to 94 (VLFHTFTMLVYIFPLIGALIA), 104 to 124 (ILYLSLVYSLGAMVVSFGAVP), 132 to 152 (AVTVVGLLLIAIGTGGIKPCV), 173 to 193 (FSLFYFAINAGSLISTTFTPI), 207 to 227 (FSLAFGVPAILMIFSVIIFMA), 334 to 354 (VVNPLLILGFLPLFDYIIYPA), 364 to 384 (LQKLTLGLLLAALGFFLSAGL), 597 to 619 (LPQIVVMTAAEVMFSVTGLEFSY), 629 to 649 (VLQACWLLSVAIGNMLVVVIA), and 659 to 679 (GEFTLFASLMLVDMMIFLWLA).

Belongs to the major facilitator superfamily. Proton-dependent oligopeptide transporter (POT/PTR) (TC 2.A.17) family. As to expression, expressed in thorax and abdomen of females: apical epithelial membranes of midgut, rectum, and reproductive tract. Also expressed in neuropil of the central nervous system, with elevated expression within the alpha- and beta-lobes of the mushroom bodies.

The protein localises to the membrane. Its function is as follows. Important role in absorption of dietary peptides. High-affinity transporter of alanylalanine. Dipeptide transport activity is proton dependent. The polypeptide is Peptide transporter family 1 (yin) (Drosophila melanogaster (Fruit fly)).